A 175-amino-acid chain; its full sequence is Large ribosomal subunit protein uL30 (175 aa).

The protein belongs to the universal ribosomal protein uL30 family. In terms of assembly, part of the 50S ribosomal subunit.

This chain is Large ribosomal subunit protein uL30, found in Pyrobaculum neutrophilum (strain DSM 2338 / JCM 9278 / NBRC 100436 / V24Sta) (Thermoproteus neutrophilus).